The following is a 436-amino-acid chain: Protein FAM83A (436 aa).

The segment at M1–G298 is DUF1669. The interval A73–L95 is disordered. S301, S329, S350, and S359 each carry phosphoserine. The segment at P302–L371 is disordered. The segment covering L321–Q349 has biased composition (polar residues). Residues S350 to S359 show a composition bias toward low complexity.

Belongs to the FAM83 family. In terms of assembly, directly interacts (via DUF1669) with casein kinase isoforms CSNK1A1, CSNK1A1L, CSNK1D and CSNK1E. May be phosphorylated upon EGFR activation. Widely expressed, with relatively higher expression levels in adipose tissues, especially in epididymal and inguinal white adipose tissue (at protein level).

The protein resides in the cytoplasm. The protein localises to the mitochondrion. Involved in mitochondrial maintenance during adipogenesis. May be acting by playing a role in the maintenance of normal mitochondrial function. This is Protein FAM83A from Mus musculus (Mouse).